The chain runs to 337 residues: Protein-methionine-sulfoxide reductase catalytic subunit MsrP (337 aa).

Residues 1-50 (MLIKLPSASGSKESDVTPESIYLSRRTLLASSLAGLAVTALPRWASAADA) constitute a signal peptide (tat-type signal). Mo-molybdopterin is bound by residues asparagine 94, 97 to 98 (YE), cysteine 152, threonine 187, asparagine 237, arginine 242, and 253 to 255 (SVK).

Belongs to the MsrP family. Heterodimer of a catalytic subunit (MsrP) and a heme-binding subunit (MsrQ). Mo-molybdopterin serves as cofactor. Post-translationally, predicted to be exported by the Tat system. The position of the signal peptide cleavage has not been experimentally proven.

Its subcellular location is the periplasm. It catalyses the reaction L-methionyl-[protein] + a quinone + H2O = L-methionyl-(S)-S-oxide-[protein] + a quinol. It carries out the reaction L-methionyl-[protein] + a quinone + H2O = L-methionyl-(R)-S-oxide-[protein] + a quinol. Part of the MsrPQ system that repairs oxidized periplasmic proteins containing methionine sulfoxide residues (Met-O), using respiratory chain electrons. Thus protects these proteins from oxidative-stress damage caused by reactive species of oxygen and chlorine generated by the host defense mechanisms. MsrPQ is essential for the maintenance of envelope integrity under bleach stress, rescuing a wide series of structurally unrelated periplasmic proteins from methionine oxidation. The catalytic subunit MsrP is non-stereospecific, being able to reduce both (R-) and (S-) diastereoisomers of methionine sulfoxide. The chain is Protein-methionine-sulfoxide reductase catalytic subunit MsrP from Pseudomonas syringae pv. tomato (strain ATCC BAA-871 / DC3000).